The sequence spans 295 residues: MSTTPASNAKFSDYLELTKPRLSMLSVMTALVGYLAARPPWDPIQLALLVLGTSAAAGGVAALNQWLEHDTDAHMKRTADRPIPAGKVATGSAFVLGVLMCIGSLFLLYALVHPLAALFTLLTIFSYLGWYTPAKRWSRWSTEIGAVAGAFPPLIGWSAGEGRVTALGWVLFGVLFFWQVPHFMAVAWTYRKDYSAVHFPMLPVRDESGERVALWSLINTAALLVTSLLPLLWGLTTWFYGVAAAVTGLWFLWQAIKFMQPATRDRAARKLFFASIGYLPLVLGALVIDRLFLVS.

The next 7 membrane-spanning stretches (helical) occupy residues Pro43–Leu63, Ser92–Val112, Pro114–Ala134, Trp140–Gly160, Ala166–Val186, Leu231–Phe251, and Phe272–Phe292.

The protein belongs to the UbiA prenyltransferase family. Protoheme IX farnesyltransferase subfamily.

It localises to the cell inner membrane. It catalyses the reaction heme b + (2E,6E)-farnesyl diphosphate + H2O = Fe(II)-heme o + diphosphate. Its pathway is porphyrin-containing compound metabolism; heme O biosynthesis; heme O from protoheme: step 1/1. Converts heme B (protoheme IX) to heme O by substitution of the vinyl group on carbon 2 of heme B porphyrin ring with a hydroxyethyl farnesyl side group. This Opitutus terrae (strain DSM 11246 / JCM 15787 / PB90-1) protein is Protoheme IX farnesyltransferase.